The chain runs to 578 residues: Moesin/ezrin/radixin homolog 1 (578 aa).

An FERM domain is found at 1 to 296 (MSPKALNVRV…GNHELYMRRR (296 aa)). The tract at residues 463 to 555 (ASTTPQHHHV…HRENVRQGRD (93 aa)) is disordered. Residues 475-484 (DENENEEELT) show a composition bias toward acidic residues. Over residues 492–555 (VSRDLDTDEH…HRENVRQGRD (64 aa)) the composition is skewed to basic and acidic residues. At threonine 559 the chain carries Phosphothreonine.

Interacts with wgn. Interacts with Mer and arm at the adherens junction. Interacts with cytoskeletal actin at apical buds of microvilli in the precellularised embryo. Interacts with PCID2 (possibly via FERM domain). Post-translationally, phosphorylated on Thr-559. In the oocyte this phosphorylation is induced by phosphatidylinositol 4,5-bisphosphate (PtdIns[4,5]P(2)) generated by sktl.

The protein resides in the cell junction. It is found in the adherens junction. The protein localises to the cell projection. Its subcellular location is the microvillus. It localises to the rhabdomere. The protein resides in the cell membrane. It is found in the cytoplasm. The protein localises to the cytoskeleton. Its subcellular location is the cell cortex. It localises to the cilium. The protein resides in the flagellum. It is found in the nucleus. The protein localises to the nucleoplasm. Its subcellular location is the chromosome. Involved in connections of major cytoskeletal structures to the plasma membrane. Together with wgn, involved in control of axon targeting of R8 and R2-R5 photoreceptors, independent of egr. In the nucleus, recruited to sites of active transcription by RNA polymerase II where it has a role in nuclear mRNA export together with the mRNA export factor PCID2 and other messenger ribonucleoprotein (mRNP) particles. The sequence is that of Moesin/ezrin/radixin homolog 1 (Moe) from Drosophila melanogaster (Fruit fly).